The primary structure comprises 288 residues: Bifunctional protein FolD (288 aa).

NADP(+) contacts are provided by residues G171–S173, S196, and T237.

The protein belongs to the tetrahydrofolate dehydrogenase/cyclohydrolase family. In terms of assembly, homodimer.

It catalyses the reaction (6R)-5,10-methylene-5,6,7,8-tetrahydrofolate + NADP(+) = (6R)-5,10-methenyltetrahydrofolate + NADPH. The enzyme catalyses (6R)-5,10-methenyltetrahydrofolate + H2O = (6R)-10-formyltetrahydrofolate + H(+). Its pathway is one-carbon metabolism; tetrahydrofolate interconversion. Catalyzes the oxidation of 5,10-methylenetetrahydrofolate to 5,10-methenyltetrahydrofolate and then the hydrolysis of 5,10-methenyltetrahydrofolate to 10-formyltetrahydrofolate. This chain is Bifunctional protein FolD, found in Elusimicrobium minutum (strain Pei191).